The primary structure comprises 194 residues: Imidazoleglycerol-phosphate dehydratase (194 aa).

It belongs to the imidazoleglycerol-phosphate dehydratase family.

Its subcellular location is the cytoplasm. The enzyme catalyses D-erythro-1-(imidazol-4-yl)glycerol 3-phosphate = 3-(imidazol-4-yl)-2-oxopropyl phosphate + H2O. It functions in the pathway amino-acid biosynthesis; L-histidine biosynthesis; L-histidine from 5-phospho-alpha-D-ribose 1-diphosphate: step 6/9. The protein is Imidazoleglycerol-phosphate dehydratase of Lacticaseibacillus paracasei (strain ATCC 334 / BCRC 17002 / CCUG 31169 / CIP 107868 / KCTC 3260 / NRRL B-441) (Lactobacillus paracasei).